A 460-amino-acid polypeptide reads, in one-letter code: Cyclin-A1-1 (460 aa).

Disordered regions lie at residues 1–52 (MSNI…ITNQ) and 95–126 (PHKV…KSPQ). Low complexity-rich tracts occupy residues 10 to 19 (SSFSSSTKSS) and 100 to 111 (SSPSKSDDGSVS).

It belongs to the cyclin family. Cyclin AB subfamily. Interacts with FZR2/CCS52A1, FZR1/CCS52A2 and FZR3/CCS52B.

This is Cyclin-A1-1 (CYCA1-1) from Arabidopsis thaliana (Mouse-ear cress).